The chain runs to 352 residues: C-C chemokine receptor type 5 (352 aa).

The Extracellular segment spans residues 1–30 (MDYQVSSPIYDINYYTSEPCQKINVKQIAA). Residue tyrosine 3 is modified to Sulfotyrosine. O-linked (GalNAc...) serine glycans are attached at residues serine 6 and serine 7. A sulfotyrosine mark is found at tyrosine 10, tyrosine 14, and tyrosine 15. Cystine bridges form between cysteine 20/cysteine 269 and cysteine 101/cysteine 178. A helical membrane pass occupies residues 31-58 (RLLPPLYSLVFIFGFVGNMLVILILINC). Over 59–68 (KRLKSMTDIY) the chain is Cytoplasmic. Residues 69–89 (LLNLAISDLFFLLTVPFWAHY) traverse the membrane as a helical segment. The Extracellular segment spans residues 90 to 102 (AAAQWDFGNTMCQ). Residues 103–124 (LLTGLYFIGFFSGIFFIILLTI) traverse the membrane as a helical segment. Residues 125-141 (DRYLAVVHAVFALKART) are Cytoplasmic-facing. Residues 142–166 (VTFGVVTSVITWVVAVFASLPGIIF) traverse the membrane as a helical segment. Over 167–198 (TRSQKEGLHYTCSSHFPYSQYQFWKNFQTLKI) the chain is Extracellular. Residues 199–218 (VILGLVLPLLVMVICYSGIL) traverse the membrane as a helical segment. Topologically, residues 219 to 235 (KTLLRCRNEKKRHRAVR) are cytoplasmic. A helical transmembrane segment spans residues 236-260 (LIFTIMIVYFLFWAPYNIVLLLNTF). The Extracellular segment spans residues 261–277 (QEFFGLNNCSSSNRLDQ). Residues 278 to 301 (AMQVTETLGMTHCCINPIIYAFVG) form a helical membrane-spanning segment. The Cytoplasmic segment spans residues 302–352 (EKFRNYLLVFFQKHIAKRFCKCCSIFQQEAPERASSVYTRSTGEQEISVGL). S-palmitoyl cysteine attachment occurs at residues cysteine 321, cysteine 323, and cysteine 324. Residues serine 336, serine 337, serine 342, and serine 349 each carry the phosphoserine; by BARK1 modification.

It belongs to the G-protein coupled receptor 1 family. As to quaternary structure, interacts with PRAF2. Efficient ligand binding to CCL3/MIP-1alpha and CCL4/MIP-1beta requires sulfation, O-glycosylation and sialic acid modifications. Glycosylation on Ser-6 is required for efficient binding of CCL4. Interacts with GRK2. Interacts with ARRB1 and ARRB2. Interacts with CNIH4. Interacts with S100A4; this interaction stimulates T-lymphocyte chemotaxis. (Microbial infection) Interacts with HIV-1 surface protein gp120. In terms of assembly, (Microbial infection) May interact with human cytomegalovirus/HHV-5 protein UL78. Post-translationally, sulfated on at least 2 of the N-terminal tyrosines. Sulfation contributes to the efficiency of HIV-1 entry and is required for efficient binding of the chemokines, CCL3 and CCL4. In terms of processing, O-glycosylated, but not N-glycosylated. Ser-6 appears to be the major site even if Ser-7 may be also O-glycosylated. Also sialylated glycans present which contribute to chemokine binding. Thr-16 and Ser-17 may also be glycosylated and, if so, with small moieties such as a T-antigen. Palmitoylation in the C-terminal is important for cell surface expression, and to a lesser extent, for HIV entry. Post-translationally, phosphorylation on serine residues in the C-terminal is stimulated by binding CC chemokines especially by APO-RANTES. In terms of tissue distribution, highly expressed in spleen, thymus, in the myeloid cell line THP-1, in the promyeloblastic cell line KG-1a and on CD4+ and CD8+ T-cells. Medium levels in peripheral blood leukocytes and in small intestine. Low levels in ovary and lung.

It is found in the cell membrane. In terms of biological role, receptor for a number of inflammatory CC-chemokines including CCL3/MIP-1-alpha, CCL4/MIP-1-beta and RANTES and subsequently transduces a signal by increasing the intracellular calcium ion level. May play a role in the control of granulocytic lineage proliferation or differentiation. Participates in T-lymphocyte migration to the infection site by acting as a chemotactic receptor. (Microbial infection) Acts as a coreceptor (CD4 being the primary receptor) of human immunodeficiency virus-1/HIV-1. The sequence is that of C-C chemokine receptor type 5 from Homo sapiens (Human).